The following is a 349-amino-acid chain: MVRAKRKLDHIEYALSTGQSRTHGFHDIDFVHQSLPNSNYDTITCETKIGELSLSSPIFINAMTGGGGEKTLHINEQLAYVAKHHNLAMAVGSQMAALKDESEAASYKVIRKVNPNGIFFANLGSEATIEQAERAVDMIEANALQIHLNVIQELTMPEGDRDFTGVLQRIEKIVLNSKVPIIVKEVGFGMSKETMQQLVNVGVTAIDIGGQGGTNFAAVENERRQRMLSYFNNWGIQTATSIIEATSTNNNLSFIASGGIQTALDVAKAIALGANTTAFAGYFLRILMQDGIEKLVDEIELLHTDLKFIMTALGAKTIEELQSVPLVVKGETYHWLMQRGIDTAHYSRR.

6–7 lines the substrate pocket; that stretch reads RK. FMN-binding positions include 62-64, Ser-93, and Asn-122; that span reads AMT. Gln-152 contributes to the substrate binding site. Residue Glu-153 participates in Mg(2+) binding. Residues Lys-184, Thr-214, 258–259, and 280–281 each bind FMN; these read GG and AG.

It belongs to the IPP isomerase type 2 family. Homooctamer. Dimer of tetramers. Requires FMN as cofactor. It depends on NADPH as a cofactor. Mg(2+) is required as a cofactor.

The protein localises to the cytoplasm. The enzyme catalyses isopentenyl diphosphate = dimethylallyl diphosphate. Functionally, involved in the biosynthesis of isoprenoids. Catalyzes the 1,3-allylic rearrangement of the homoallylic substrate isopentenyl (IPP) to its allylic isomer, dimethylallyl diphosphate (DMAPP). This chain is Isopentenyl-diphosphate delta-isomerase, found in Bacillus cereus (strain ATCC 14579 / DSM 31 / CCUG 7414 / JCM 2152 / NBRC 15305 / NCIMB 9373 / NCTC 2599 / NRRL B-3711).